The following is a 59-amino-acid chain: TLQGQKDVIELLKEEGLRDKIKVMVGGAPATQAWADKIGADCYAENASEAVAKAKELLA.

Positions 1–59 (TLQGQKDVIELLKEEGLRDKIKVMVGGAPATQAWADKIGADCYAENASEAVAKAKELLA) constitute a B12-binding domain.

This sequence belongs to the methylamine corrinoid protein family.

It functions in the pathway one-carbon metabolism; methanogenesis from dimethylamine. Functionally, acts as a methyl group carrier between MtbB and MtbA. In Methanosarcina thermophila, this protein is Dimethylamine corrinoid protein (mtbC).